The following is a 119-amino-acid chain: Gas vesicle protein O1 (119 aa).

Residues 1-12 (MADPANDRSERE) are compositionally biased toward basic and acidic residues. The disordered stretch occupies residues 1 to 48 (MADPANDRSEREEGGEDDETPPASDGNPSPSANSFTLSNAQTRAREAA). The span at 26–42 (GNPSPSANSFTLSNAQT) shows a compositional bias: polar residues.

This sequence belongs to the gas vesicle GvpO family. In terms of assembly, forms homodimers, forms a GvpN1-GvpO1 heterodimer, interacts with GvpC1 (via the latter's C-terminus), GvpF1, GvpI1 and GvpL1, might interact with GvpA1.

Its subcellular location is the gas vesicle. It is found in the cytoplasm. In terms of biological role, a minor component of the gas vesicle, also found in soluble extracts. May play a role in transcription and/or RNA stability and in GV assembly. Gas vesicles are hollow, gas filled proteinaceous nanostructures found in several microbial planktonic microorganisms. They allow positioning of halobacteria at the optimal depth for growth in the poorly aerated, shallow brine pools of their habitat. Expression of a 9.5 kb p-vac DNA fragment containing 2 divergently transcribed regions (gvpD-gvpE-gvpF-gvpG-gvpH-gvpI-gvpJ-gvpK-gvpL-gvpM and gvpA-gvpC-gvpN-gvpO) allows H.volcanii to produce gas vesicles. A minimal gas vesicle can be made in H.volcanii by gvpA1-gvpO1 gvpF1-gvpG1-gvpJ1-gvpK1-gvpL1-gvpM1; lack of enough GvpJ1 prevents formation. The same region restores gas vesicle production in H.halobium without the p-vac locus, but it still has the c-vac locus. This chain is Gas vesicle protein O1, found in Halobacterium salinarum (strain ATCC 700922 / JCM 11081 / NRC-1) (Halobacterium halobium).